The primary structure comprises 144 residues: Interleukin-9 (144 aa).

The first 18 residues, 1–18 (MLVTYILASVLLFSSVLG), serve as a signal peptide directing secretion. Pyrrolidone carboxylic acid is present on Q19. Residues N50, N78, N101, and N114 are each glycosylated (N-linked (GlcNAc...) asparagine).

Belongs to the IL-7/IL-9 family. As to quaternary structure, interacts with IL9R. Interacts with IL2RG.

It localises to the secreted. Multifunctional cytokine secreted mainly by T-helper 2 lymphocytes and also mast cells or NKT cells that plays important roles in the immune response against parasites. Affects intestinal epithelial permeability and adaptive immunity. In addition, induces the differentiation of specific T-cell subsets such as IL-17 producing helper T-cells (TH17) and also proliferation and differentiation of mast cells. Mechanistically, exerts its biological effects through a receptor composed of IL9R subunit and a signal transducing subunit IL2RG. Receptor stimulation results in the rapid activation of JAK1 and JAK3 kinase activities leading to STAT1, STAT3 and STAT5-mediated transcriptional programs. Induction of differentiation genes seems to be mediated by STAT1 alone, while protection of cells from apoptosis depends on STAT3 and STAT5. The polypeptide is Interleukin-9 (Il9) (Mus musculus (Mouse)).